Reading from the N-terminus, the 772-residue chain is Mitochondrial intermediate peptidase (772 aa).

The transit peptide at 1–37 directs the protein to the mitochondrion; that stretch reads MLRTIILKAGSNASIPSPSRQNKLLRFFATAGAVSRT. Histidine 558 serves as a coordination point for Zn(2+). Residue glutamate 559 is part of the active site. Zn(2+)-binding residues include histidine 562 and glutamate 587.

It belongs to the peptidase M3 family. It depends on Zn(2+) as a cofactor.

It is found in the mitochondrion matrix. The catalysed reaction is Release of an N-terminal octapeptide as second stage of processing of some proteins imported into the mitochondrion.. Its activity is regulated as follows. Stimulated by Fe(2+). Functionally, cleaves proteins, imported into the mitochondrion, to their mature size. While most mitochondrial precursor proteins are processed to the mature form in one step by mitochondrial processing peptidase (MPP), the sequential cleavage by MIP of an octapeptide after initial processing by MPP is a required step for a subgroup of nuclear-encoded precursor proteins destined for the matrix or the inner membrane. Cleaves precursor proteins of respiratory components, including subunits of the electron transport chain and tricarboxylic acid cycle enzymes, and components of the mitochondrial genetic machinery, including ribosomal proteins, translation factors, and proteins required for mitochondrial DNA metabolism. The protein is Mitochondrial intermediate peptidase (OCT1) of Saccharomyces cerevisiae (strain ATCC 204508 / S288c) (Baker's yeast).